A 275-amino-acid polypeptide reads, in one-letter code: MASAHTTQTPFNRLLLTGAAGGLGKVLRETLRPYSHILRLSDIAEMAPAVGDHEEVQVCDLADKDAVHRLVEGVDAILHFGGVSVERPFEEILGANICGVFHIYEAARRHGVKRVIFASSNHVIGFYKQNETIDAHSPRRPDSYYGLSKSYGEDMASFYFDRYGIETVSIRIGSSFPEPQNRRMMSTWLSFDDLTRLLERALYTPDVGHTVVYGVSDNKTVWWDNRFASKLDYAPKDSSEVFRAKVDAQPMPADDDPAMVYQGGAFVASGPFGDK.

NAD(+) contacts are provided by residues 22–23 (GL), 42–44 (DIA), 60–61 (DL), and 80–84 (FGGVS). Substrate is bound by residues Ser-84 and 120 to 122 (SNH). Catalysis depends on Tyr-145, which acts as the Proton acceptor. Lys-149 is a binding site for NAD(+). A substrate-binding site is contributed by Ser-174. Ser-175 contacts NAD(+). Arg-183 is a binding site for substrate.

The protein belongs to the NAD(P)-dependent epimerase/dehydratase family. In terms of assembly, homohexamer.

The enzyme catalyses beta-D-galacturonate + NAD(+) = D-galactaro-1,5-lactone + NADH + H(+). The catalysed reaction is beta-D-glucuronate + NAD(+) = D-glucaro-1,5-lactone + NADH + H(+). Its pathway is carbohydrate acid metabolism; D-galacturonate degradation via prokaryotic oxidative pathway. Its function is as follows. Catalyzes the oxidation of beta-D-galacturonate and beta-D-glucuronate to galactarate and D-glucarate, respectively. Cannot use NADP(+) instead of NAD(+) as cosubstrate. This chain is Uronate dehydrogenase (udh), found in Pseudomonas syringae pv. tomato (strain ATCC BAA-871 / DC3000).